Reading from the N-terminus, the 142-residue chain is uncharacterized protein (142 aa).

The disordered stretch occupies residues 70 to 94 (PKSVSNSKKKKEKAEKGLLRPTTKP). Residues 81–94 (EKAEKGLLRPTTKP) are compositionally biased toward basic and acidic residues.

This is an uncharacterized protein from Bacillus subtilis (strain 168).